A 194-amino-acid polypeptide reads, in one-letter code: Adenylate kinase (194 aa).

Position 11–16 (11–16 (GSGKGT)) interacts with ATP. Residues 31-60 (STGELLRAEIKAQTELGQAAAGYINEGHLV) form an NMP region. AMP is bound by residues Thr-32, Arg-37, 58–60 (HLV), 86–89 (GFPR), and Gln-93. Residues 127 to 137 (NRGKISGRSDD) form an LID region. Arg-128 is a binding site for ATP. Positions 134 and 145 each coordinate AMP. Gly-173 is a binding site for ATP.

The protein belongs to the adenylate kinase family. In terms of assembly, monomer.

Its subcellular location is the cytoplasm. It carries out the reaction AMP + ATP = 2 ADP. It participates in purine metabolism; AMP biosynthesis via salvage pathway; AMP from ADP: step 1/1. Functionally, catalyzes the reversible transfer of the terminal phosphate group between ATP and AMP. Plays an important role in cellular energy homeostasis and in adenine nucleotide metabolism. In Porphyromonas gingivalis (strain ATCC 33277 / DSM 20709 / CIP 103683 / JCM 12257 / NCTC 11834 / 2561), this protein is Adenylate kinase.